The sequence spans 360 residues: Protein phosphatase 1L (360 aa).

Residues 1–25 (MIEDTMTLLSLLGRIMRYFLLRPET) lie on the Extracellular side of the membrane. Residues 26–42 (LFLLCISLALWSYFFHT) form a helical membrane-spanning segment. Residues 43–360 (DEVKTIVKSS…FRNSSKTEEH (318 aa)) lie on the Cytoplasmic side of the membrane. The PPM-type phosphatase domain maps to 92-351 (NVAVYSIQGR…DNITVMVVKF (260 aa)). Residues aspartate 128, glycine 129, aspartate 302, and aspartate 342 each contribute to the Mn(2+) site.

It belongs to the PP2C family. Interacts with MAP3K7/TAK1 and MAP3K5. Mg(2+) serves as cofactor. Mn(2+) is required as a cofactor. Expressed in brain, heart, testis, liver, lung and skeletal muscle.

The protein localises to the membrane. The catalysed reaction is O-phospho-L-seryl-[protein] + H2O = L-seryl-[protein] + phosphate. It catalyses the reaction O-phospho-L-threonyl-[protein] + H2O = L-threonyl-[protein] + phosphate. Its function is as follows. Acts as a suppressor of the SAPK signaling pathways by associating with and dephosphorylating MAP3K7/TAK1 and MAP3K5, and by attenuating the association between MAP3K7/TAK1 and MAP2K4 or MAP2K6. This chain is Protein phosphatase 1L (Ppm1l), found in Mus musculus (Mouse).